We begin with the raw amino-acid sequence, 164 residues long: UPF0114 protein Sbal_0780 (164 aa).

4 consecutive transmembrane segments (helical) span residues Ile15–Phe35, Leu53–Val73, Val109–Glu129, and Ile136–Leu156.

It belongs to the UPF0114 family.

The protein localises to the cell membrane. The sequence is that of UPF0114 protein Sbal_0780 from Shewanella baltica (strain OS155 / ATCC BAA-1091).